The following is a 268-amino-acid chain: Interleukin-1 alpha (268 aa).

Residues 1 to 112 (MAKVPDLFED…NTEEEIIKPR (112 aa)) constitute a propeptide that is removed on maturation. Residue K82 is modified to N6-acetyllysine. Residues 82–86 (KKRRL) are nuclear localization signal (NLS). S87 is subject to Phosphoserine. Residues N102 and N141 are each glycosylated (N-linked (GlcNAc...) asparagine).

It belongs to the IL-1 family. In terms of assembly, monomer. Interacts with TMED10; the interaction mediates the translocation from the cytoplasm into the ERGIC (endoplasmic reticulum-Golgi intermediate compartment) and thereby secretion. Interacts with IL1R1. Interacts with S100A13; this interaction is the first step in the export of IL1A, followed by direct translocation of this complex across the plasma membrane. In terms of processing, acetylated within its nuclear localization sequence, which impacts subcellular localization. Proteolytic processed by CAPN1 in a calcium-dependent manner. Cleavage from 31 kDa precursor to 18 kDa biologically active molecules. Post-translationally, phosphorylated. Phosphorylation greatly enhances susceptibility to digestion and promotes the conversion of pre-IL1A alpha to the biologically active IL1A.

It is found in the nucleus. The protein localises to the cytoplasm. It localises to the secreted. Its function is as follows. Cytokine constitutively present intracellularly in nearly all resting non-hematopoietic cells that plays an important role in inflammation and bridges the innate and adaptive immune systems. After binding to its receptor IL1R1 together with its accessory protein IL1RAP, forms the high affinity interleukin-1 receptor complex. Signaling involves the recruitment of adapter molecules such as MYD88, IRAK1 or IRAK4. In turn, mediates the activation of NF-kappa-B and the three MAPK pathways p38, p42/p44 and JNK pathways. Within the cell, acts as an alarmin and cell death results in its liberation in the extracellular space after disruption of the cell membrane to induce inflammation and alert the host to injury or damage. In addition to its role as a danger signal, which occurs when the cytokine is passively released by cell necrosis, directly senses DNA damage and acts as signal for genotoxic stress without loss of cell integrity. This chain is Interleukin-1 alpha (IL1A), found in Bos taurus (Bovine).